Consider the following 1015-residue polypeptide: Frequency clock protein (1015 aa).

8 disordered regions span residues 1–138 (MQPT…SADD), 183–285 (KRKK…QKVD), 352–383 (DFSP…TFSS), 402–465 (HVAG…DPDR), 544–614 (GRKI…VSAS), 629–668 (SPNE…NRRK), 706–728 (ERPD…GSSI), and 895–1015 (SEDD…SSQG). Over residues 49 to 68 (SAPPNDSNENSSSPRRASSG) the composition is skewed to low complexity. A compositionally biased stretch (basic and acidic residues) spans 69–80 (ESHETGQSDAKK). Residues 82-95 (FNQSNQNPTATFDS) show a composition bias toward polar residues. Residues 107-117 (KESDSSNEDKP) show a composition bias toward basic and acidic residues. Low complexity-rich tracts occupy residues 203-216 (SPNT…STTK), 228-267 (SGSG…SGTS), and 356-368 (QQQQ…QQQQ). Residues 369 to 383 (PKSNFITNPGATFSS) are compositionally biased toward polar residues. Residues 431–442 (NSSSNGNDSGTN) are compositionally biased toward low complexity. A compositionally biased stretch (pro residues) spans 443–453 (PSPPMPPPPEQ). Over residues 454-465 (RPTRPRDLDPDR) the composition is skewed to basic and acidic residues. Over residues 556-570 (TKFSSESSGDLSQRS) the composition is skewed to polar residues. The Nuclear localization signal motif lies at 584 to 588 (HKRQK). Residues 590–600 (GHSTGDSGSSG) show a composition bias toward low complexity. A compositionally biased stretch (polar residues) spans 629–643 (SPNEQSSMEDGTLSS). Acidic residues-rich tracts occupy residues 895-909 (SEDD…EFNS) and 934-946 (SGDE…EDDI). Residues 976 to 1003 (GSSRGRSNSASAEAVLRAGGSSAATAGG) are compositionally biased toward low complexity.

The protein belongs to the FRQ family.

The protein resides in the nucleus. Functionally, circadian clock component involved in the generation of biological rhythms, in particular in rhythm stability, period length, and temperature compensation. Behaves as a negative element in circadian transcriptional loop. The polypeptide is Frequency clock protein (FRQ) (Trichoderma spinulosum (Hypocrea spinulosa)).